A 524-amino-acid polypeptide reads, in one-letter code: Tubulin-specific chaperone E (524 aa).

Ser2 carries the post-translational modification N-acetylserine. The 45-residue stretch at 27 to 71 (GAVPPVAGLWLGVEWDNPERGKHDGSHEGTMYFKCRHPTGGSFVR) folds into the CAP-Gly domain. LRR repeat units lie at residues 154 to 175 (NIRV…VLIA), 180 to 201 (DLEA…PTLT), 206 to 227 (TLKT…HCAP), 231 to 253 (VLEE…NVLQ), 254 to 275 (KMRL…SLIA), 279 to 300 (RLEH…DAEI), and 309 to 330 (ALKY…NELD). One can recognise an LRRCT domain in the interval 343–381 (NPLSKADKAEEIIIAKIAQLRTLNRCQILPEERRGAELD). An N6-acetyllysine modification is found at Lys460. Ser492 bears the Phosphoserine mark.

It belongs to the TBCE family. As to quaternary structure, supercomplex made of cofactors A to E. Cofactors A and D function by capturing and stabilizing tubulin in a quasi-native conformation. Cofactor E binds to the cofactor D-tubulin complex; interaction with cofactor C then causes the release of tubulin polypeptides that are committed to the native state. Cofactors B and E can form a heterodimer which binds to alpha-tubulin and enhances their ability to dissociate tubulin heterodimers. Interacts with TBCD. Ubiquitously expressed.

Its subcellular location is the cytoplasm. The protein localises to the cytoskeleton. Functionally, tubulin-folding protein; involved in the second step of the tubulin folding pathway and in the regulation of tubulin heterodimer dissociation. Required for correct organization of microtubule cytoskeleton and mitotic splindle, and maintenance of the neuronal microtubule network. This chain is Tubulin-specific chaperone E (Tbce), found in Mus musculus (Mouse).